We begin with the raw amino-acid sequence, 366 residues long: D-alanine--D-alanine ligase (366 aa).

The region spanning 144-347 (KRLLKDAGLK…YRELIENLIE (204 aa)) is the ATP-grasp domain. 174-229 (KEELGLPMFIKPANQGSSVGVHKVENEEQFYSAIKDAFQFDHKLLVEEAIVGREIE) provides a ligand contact to ATP. 3 residues coordinate Mg(2+): Asp-301, Glu-314, and Asn-316.

This sequence belongs to the D-alanine--D-alanine ligase family. The cofactor is Mg(2+). It depends on Mn(2+) as a cofactor.

The protein localises to the cytoplasm. The enzyme catalyses 2 D-alanine + ATP = D-alanyl-D-alanine + ADP + phosphate + H(+). It functions in the pathway cell wall biogenesis; peptidoglycan biosynthesis. Cell wall formation. This is D-alanine--D-alanine ligase from Oceanobacillus iheyensis (strain DSM 14371 / CIP 107618 / JCM 11309 / KCTC 3954 / HTE831).